The primary structure comprises 554 residues: DDB1- and CUL4-associated factor 11 homolog (554 aa).

The disordered stretch occupies residues 24–52 (QRMKNRNDSDTDFSDDDEETSGGCPKMTP). The span at 33-43 (DTDFSDDDEET) shows a compositional bias: acidic residues. WD repeat units lie at residues 245 to 284 (QNQC…RIRT), 288 to 328 (AHED…DGDV), 336 to 375 (GHRD…CQGG), 414 to 458 (GHSV…VSRR), and 461 to 500 (GHQA…EGVI). A disordered region spans residues 527–554 (PQRKLRKPISARNAKCPTTSSEPDDFQI).

This sequence belongs to the WD repeat LEC14B family.

Its function is as follows. Involved in regulation of lifespan. Required for dopaminergic CEP neuron degeneration in response to Mn(2+). This Caenorhabditis briggsae protein is DDB1- and CUL4-associated factor 11 homolog (wdr-23).